A 418-amino-acid chain; its full sequence is Zinc finger protein 566 (418 aa).

Residues 6 to 77 (VMFSDVSVDF…DRELTRGQWP (72 aa)) form the KRAB domain. The segment at 169-193 (KFCASKEYRKTFRHGSQFATHEIIH) adopts a C2H2-type 1; degenerate zinc-finger fold. C2H2-type zinc fingers lie at residues 199 to 221 (YECK…QKIH), 227 to 249 (FECK…HRIH), 255 to 277 (YECK…QRIH), 283 to 305 (YECK…QRIH), 311 to 333 (YECK…QRIH), 339 to 361 (YECK…QRIH), and 367 to 389 (YECK…HRIH). Glycyl lysine isopeptide (Lys-Gly) (interchain with G-Cter in SUMO2) cross-links involve residues Lys314 and Lys328.

It belongs to the krueppel C2H2-type zinc-finger protein family.

The protein resides in the nucleus. Functionally, may be involved in transcriptional regulation. This is Zinc finger protein 566 (ZNF566) from Pan troglodytes (Chimpanzee).